A 436-amino-acid polypeptide reads, in one-letter code: Enolase (436 aa).

Substrate-binding residues include histidine 159 and glutamate 168. Catalysis depends on glutamate 211, which acts as the Proton donor. Aspartate 246, glutamate 295, and aspartate 322 together coordinate Mg(2+). Glutamate 295 and aspartate 322 together coordinate substrate. Lysine 347 serves as the catalytic Proton acceptor. Substrate contacts are provided by residues 374–377 (SHRS) and lysine 398.

The protein belongs to the enolase family. Homodimer. Requires Mg(2+) as cofactor.

The protein resides in the cytoplasm. The enzyme catalyses (2R)-2-phosphoglycerate = phosphoenolpyruvate + H2O. It participates in carbohydrate degradation; glycolysis; pyruvate from D-glyceraldehyde 3-phosphate: step 4/5. The polypeptide is Enolase (Neocallimastix frontalis (Rumen fungus)).